The following is a 191-amino-acid chain: Adenylate kinase (191 aa).

An ATP-binding site is contributed by 12–17 (GSGKTT). An NMP region spans residues 34–63 (STGDLLRAESAKKTERGLLIEKFTSQGELV). AMP-binding positions include T35, R40, 61-63 (ELV), 88-91 (GYPR), and Q95. The tract at residues 130 to 136 (GRSRGAD) is LID. R131 is a binding site for ATP. Positions 133 and 145 each coordinate AMP. R173 lines the ATP pocket.

It belongs to the adenylate kinase family. In terms of assembly, monomer.

The protein localises to the cytoplasm. It carries out the reaction AMP + ATP = 2 ADP. It participates in purine metabolism; AMP biosynthesis via salvage pathway; AMP from ADP: step 1/1. Functionally, catalyzes the reversible transfer of the terminal phosphate group between ATP and AMP. Plays an important role in cellular energy homeostasis and in adenine nucleotide metabolism. This is Adenylate kinase from Helicobacter pylori (strain HPAG1).